The primary structure comprises 514 residues: tRNA-2-methylthio-N(6)-dimethylallyladenosine synthase (514 aa).

The tract at residues 1–21 is disordered; the sequence is MNEEQRKASSVDVLAERDKKA. The MTTase N-terminal domain maps to 68–186; the sequence is RTFLIKTYGC…LPEILEEAYL (119 aa). [4Fe-4S] cluster is bound by residues Cys77, Cys113, Cys147, Cys223, Cys227, and Cys230. The Radical SAM core domain occupies 209 to 440; sequence REGNIKAWVN…KKVGHYSQIA (232 aa). The region spanning 442–505 is the TRAM domain; the sequence is SKYEGQTVTV…QYSLNGSFVK (64 aa).

Belongs to the methylthiotransferase family. MiaB subfamily. As to quaternary structure, monomer. [4Fe-4S] cluster serves as cofactor.

The protein resides in the cytoplasm. It carries out the reaction N(6)-dimethylallyladenosine(37) in tRNA + (sulfur carrier)-SH + AH2 + 2 S-adenosyl-L-methionine = 2-methylsulfanyl-N(6)-dimethylallyladenosine(37) in tRNA + (sulfur carrier)-H + 5'-deoxyadenosine + L-methionine + A + S-adenosyl-L-homocysteine + 2 H(+). Functionally, catalyzes the methylthiolation of N6-(dimethylallyl)adenosine (i(6)A), leading to the formation of 2-methylthio-N6-(dimethylallyl)adenosine (ms(2)i(6)A) at position 37 in tRNAs that read codons beginning with uridine. In Staphylococcus aureus (strain N315), this protein is tRNA-2-methylthio-N(6)-dimethylallyladenosine synthase.